The chain runs to 464 residues: Argininosuccinate lyase (464 aa).

Ala2 carries the post-translational modification N-acetylalanine. Lys7 bears the N6-acetyllysine mark. Ser27 provides a ligand contact to 2-(N(omega)-L-arginino)succinate. N6-acetyllysine is present on Lys69. Asn114 and Thr159 together coordinate 2-(N(omega)-L-arginino)succinate. Catalysis depends on His160, which acts as the Proton acceptor. Catalysis depends on Ser281, which acts as the Proton donor. Lys288 carries the post-translational modification N6-acetyllysine. 2-(N(omega)-L-arginino)succinate-binding residues include Asn289, Tyr321, Gln326, and Lys329.

Belongs to the lyase 1 family. Argininosuccinate lyase subfamily. In terms of assembly, homotetramer. Forms tissue-specific complexes with ASS1, SLC7A1, HSP90AA1 and nitric oxide synthase NOS1, NOS2 or NOS3; the complex maintenance is independent of ASL catalytic function. Acetylation modifies enzyme activity in response to alterations of extracellular nutrient availability. Acetylation increased with trichostin A (TSA) or with nicotinamide (NAM). Glucose increases acetylation by about a factor of 3 with decreasing enzyme activity. Acetylation on Lys-288 is decreased on the addition of extra amino acids resulting in activation of enzyme activity.

The catalysed reaction is 2-(N(omega)-L-arginino)succinate = fumarate + L-arginine. It participates in amino-acid biosynthesis; L-arginine biosynthesis; L-arginine from L-ornithine and carbamoyl phosphate: step 3/3. The protein operates within nitrogen metabolism; urea cycle; L-arginine and fumarate from (N(omega)-L-arginino)succinate: step 1/1. Its activity is regulated as follows. Enzyme activity is regulated by acetylation. Functionally, catalyzes the reversible cleavage of L-argininosuccinate to fumarate and L-arginine, an intermediate step reaction in the urea cycle mostly providing for hepatic nitrogen detoxification into excretable urea as well as de novo L-arginine synthesis in nonhepatic tissues. Essential regulator of intracellular and extracellular L-arginine pools. As part of citrulline-nitric oxide cycle, forms tissue-specific multiprotein complexes with argininosuccinate synthase ASS1, transport protein SLC7A1 and nitric oxide synthase NOS1, NOS2 or NOS3, allowing for cell-autonomous L-arginine synthesis while channeling extracellular L-arginine to nitric oxide synthesis pathway. This chain is Argininosuccinate lyase (ASL), found in Macaca fascicularis (Crab-eating macaque).